Here is an 83-residue protein sequence, read N- to C-terminus: Disintegrin isoform D-3 (83 aa).

Positions 2-83 constitute a Disintegrin domain; sequence PPVCGNELLE…GKSSDCPWNH (82 aa). 7 disulfides stabilise this stretch: Cys5–Cys24, Cys16–Cys34, Cys18–Cys29, Cys28–Cys51, Cys42–Cys48, Cys47–Cys72, and Cys60–Cys79. The Cell attachment site motif lies at 64–66; that stretch reads RGD.

Belongs to the venom metalloproteinase (M12B) family. P-II subfamily. P-IIa sub-subfamily. As to quaternary structure, monomer (disintegrin). Expressed by the venom gland.

The protein resides in the secreted. Inhibits fibrinogen interaction with platelets. Acts by binding to alpha-IIb/beta-3 (ITGA2B/ITGB3) on the platelet surface and inhibits aggregation induced by ADP, thrombin, platelet-activating factor and collagen. This is Disintegrin isoform D-3 from Bitis arietans (African puff adder).